A 148-amino-acid chain; its full sequence is Small ribosomal subunit protein uS15 (148 aa).

It belongs to the universal ribosomal protein uS15 family.

This is Small ribosomal subunit protein uS15 (RPS13) from Encephalitozoon cuniculi (strain GB-M1) (Microsporidian parasite).